The sequence spans 469 residues: 3-isopropylmalate dehydratase large subunit (469 aa).

[4Fe-4S] cluster is bound by residues Cys347, Cys410, and Cys413.

Belongs to the aconitase/IPM isomerase family. LeuC type 1 subfamily. In terms of assembly, heterodimer of LeuC and LeuD. The cofactor is [4Fe-4S] cluster.

It carries out the reaction (2R,3S)-3-isopropylmalate = (2S)-2-isopropylmalate. Its pathway is amino-acid biosynthesis; L-leucine biosynthesis; L-leucine from 3-methyl-2-oxobutanoate: step 2/4. In terms of biological role, catalyzes the isomerization between 2-isopropylmalate and 3-isopropylmalate, via the formation of 2-isopropylmaleate. This Polynucleobacter necessarius subsp. necessarius (strain STIR1) protein is 3-isopropylmalate dehydratase large subunit.